A 92-amino-acid polypeptide reads, in one-letter code: Large ribosomal subunit protein bL34m (92 aa).

The N-terminal 46 residues, 1 to 46 (MALLAGSLLGPTSRSAALLGGRWLQPRAWLGFPDAWGLPTPQQARG), are a transit peptide targeting the mitochondrion. Residues 40–57 (TPQQARGKSRGNEYQPSN) show a composition bias toward polar residues. The interval 40–63 (TPQQARGKSRGNEYQPSNIKRKNK) is disordered. Residue Ser-71 is modified to Phosphoserine.

This sequence belongs to the bacterial ribosomal protein bL34 family. In terms of assembly, component of the mitochondrial ribosome large subunit (39S) which comprises a 16S rRNA and about 50 distinct proteins.

It localises to the mitochondrion. This Macaca fascicularis (Crab-eating macaque) protein is Large ribosomal subunit protein bL34m (MRPL34).